A 106-amino-acid chain; its full sequence is UPF0473 protein LSEI_0788 (106 aa).

It belongs to the UPF0473 family.

This is UPF0473 protein LSEI_0788 from Lacticaseibacillus paracasei (strain ATCC 334 / BCRC 17002 / CCUG 31169 / CIP 107868 / KCTC 3260 / NRRL B-441) (Lactobacillus paracasei).